A 229-amino-acid chain; its full sequence is MAAGAFILGSTGLCGYQMLRFAEKSSLFDKISTVGRKLPDFKSEKVHLIQEADSDKWPEIIEKEAKGYSTFFSGLGSTIGAAGSAENFERIDYGINYAAAKAAKKAGVQTFVLISAPLSNANSRFLYIRTKGKLEDDIIALKFARTIILRPGILLGEREKFRSITESIIVGISKYTHGNFLSALTVPAYGEEMGQIAVNLASEPIPQSQTEPIVNIISAKQITNLAKKL.

The N-terminal 45 residues, 1-45, are a transit peptide targeting the mitochondrion; it reads MAAGAFILGSTGLCGYQMLRFAEKSSLFDKISTVGRKLPDFKSEK.

Belongs to the FMP52 family.

It localises to the mitochondrion outer membrane. The polypeptide is Protein FMP52-2, mitochondrial (FMP522) (Scheffersomyces stipitis (strain ATCC 58785 / CBS 6054 / NBRC 10063 / NRRL Y-11545) (Yeast)).